Consider the following 185-residue polypeptide: ATP synthase subunit b 2 (185 aa).

Positions 1–23 (MAEGHGDAKGATAHTAADGGHKA) are disordered. Over residues 9-18 (KGATAHTAAD) the composition is skewed to low complexity. The helical transmembrane segment at 32–51 (TFASQLVSLTIAFVALYLIV) threads the bilayer.

It belongs to the ATPase B chain family. As to quaternary structure, F-type ATPases have 2 components, F(1) - the catalytic core - and F(0) - the membrane proton channel. F(1) has five subunits: alpha(3), beta(3), gamma(1), delta(1), epsilon(1). F(0) has three main subunits: a(1), b(2) and c(10-14). The alpha and beta chains form an alternating ring which encloses part of the gamma chain. F(1) is attached to F(0) by a central stalk formed by the gamma and epsilon chains, while a peripheral stalk is formed by the delta and b chains.

It is found in the cell inner membrane. Its function is as follows. F(1)F(0) ATP synthase produces ATP from ADP in the presence of a proton or sodium gradient. F-type ATPases consist of two structural domains, F(1) containing the extramembraneous catalytic core and F(0) containing the membrane proton channel, linked together by a central stalk and a peripheral stalk. During catalysis, ATP synthesis in the catalytic domain of F(1) is coupled via a rotary mechanism of the central stalk subunits to proton translocation. Functionally, component of the F(0) channel, it forms part of the peripheral stalk, linking F(1) to F(0). The b'-subunit is a diverged and duplicated form of b found in plants and photosynthetic bacteria. This is ATP synthase subunit b 2 (atpF2) from Rhodopseudomonas palustris (strain HaA2).